A 241-amino-acid chain; its full sequence is Uridylate kinase (241 aa).

15-18 serves as a coordination point for ATP; that stretch reads KLSG. Residue Gly57 coordinates UMP. ATP-binding residues include Gly58 and Arg62. UMP-binding positions include Asp77 and 139-146; that span reads IGHTLFTT. Thr166, Asn167, Phe172, and Asp175 together coordinate ATP.

Belongs to the UMP kinase family. In terms of assembly, homohexamer.

It is found in the cytoplasm. It catalyses the reaction UMP + ATP = UDP + ADP. It functions in the pathway pyrimidine metabolism; CTP biosynthesis via de novo pathway; UDP from UMP (UMPK route): step 1/1. With respect to regulation, inhibited by UTP. Catalyzes the reversible phosphorylation of UMP to UDP. The polypeptide is Uridylate kinase (Wigglesworthia glossinidia brevipalpis).